The primary structure comprises 5098 residues: Malformin synthetase mlfA (5098 aa).

Positions 225–616 (ERHAANRPHS…CGRADTQVKL (392 aa)) are adenylation 1. In terms of domain architecture, Carrier 1 spans 756–829 (SRLEQEIQLA…EAASLAKVQE (74 aa)). Residue serine 790 is modified to O-(pantetheine 4'-phosphoryl)serine. The interval 867 to 1298 (EDVFPCTTMQ…ALDSLTLLQA (432 aa)) is condensation 1. The tract at residues 1326-1715 (DGWVTRQPES…GRKDTQVKLR (390 aa)) is adenylation 2. Residues 1853-1930 (TAASELERTL…QLAAEFGEPA (78 aa)) enclose the Carrier 2 domain. Position 1890 is an O-(pantetheine 4'-phosphoryl)serine (serine 1890). Disordered stretches follow at residues 1930–1960 (AGQS…DGVD) and 1993–2022 (GSSS…RVVS). Low complexity-rich tracts occupy residues 1933-1957 (SASS…STND) and 1993-2011 (GSSS…SSSS). The tract at residues 2063–2478 (EDIYPATALQ…ALSHSDRQTL (416 aa)) is condensation 2. Residues 2501 to 2893 (VRTPHAPAVC…IGRRDGQLKL (393 aa)) are adenylation 3. A Carrier 3 domain is found at 3029 to 3105 (RPVTAQEREM…QLMRHLSATR (77 aa)). The residue at position 3066 (serine 3066) is an O-(pantetheine 4'-phosphoryl)serine. 2 condensation regions span residues 3122-3587 (WVAL…TYDQ) and 3608-4027 (NIYP…EQLM). Positions 4052–4442 (HASREAVCAW…VGRKDNQIKF (391 aa)) are adenylation 4. Residues 4576–4652 (MPSTAAERKM…DLAYRTTNLV (77 aa)) form the Carrier 4 domain. Serine 4613 is subject to O-(pantetheine 4'-phosphoryl)serine. The condensation 5 stretch occupies residues 4689–5016 (DVLPTTSFQR…LQTIVQHQNN (328 aa)).

It belongs to the NRP synthetase family.

The protein operates within secondary metabolite biosynthesis. In terms of biological role, nonribosomal peptide synthetase; part of the gene cluster that mediates the biosynthesis of malformins, cyclic pentapeptides with a disulfide bond between 2 consecutive cysteins, that show potential anti-tumor as well as antimalarial and antitrypanosomal properties. The nonribosomal peptide synthetase mlfA is responsible of the formation of the cyclic pentapeptide. The malformin biosynthesis clusters in malformin-producing fungi also contain enzymes involved in the formation of the disulfide bond between the two consecutive cysteins within malformins, in addition to additional tailoring enzymes such as methyltransferases or oxidoreductases. They are also composed of up to 4 major facilitator superfamily transporters, and transcription factors probably involved in the regulation of the expression of those clusters. This is Malformin synthetase mlfA from Aspergillus homomorphus (strain CBS 101889).